Reading from the N-terminus, the 617-residue chain is Dihydroxy-acid dehydratase (617 aa).

Asp81 is a Mg(2+) binding site. Residue Cys122 coordinates [2Fe-2S] cluster. Residues Asp123 and Lys124 each coordinate Mg(2+). Lys124 carries the post-translational modification N6-carboxylysine. Cys197 lines the [2Fe-2S] cluster pocket. Mg(2+) is bound at residue Glu493. The Proton acceptor role is filled by Ser519.

It belongs to the IlvD/Edd family. Homodimer. [2Fe-2S] cluster serves as cofactor. Mg(2+) is required as a cofactor.

The enzyme catalyses (2R)-2,3-dihydroxy-3-methylbutanoate = 3-methyl-2-oxobutanoate + H2O. It carries out the reaction (2R,3R)-2,3-dihydroxy-3-methylpentanoate = (S)-3-methyl-2-oxopentanoate + H2O. The protein operates within amino-acid biosynthesis; L-isoleucine biosynthesis; L-isoleucine from 2-oxobutanoate: step 3/4. It functions in the pathway amino-acid biosynthesis; L-valine biosynthesis; L-valine from pyruvate: step 3/4. Functions in the biosynthesis of branched-chain amino acids. Catalyzes the dehydration of (2R,3R)-2,3-dihydroxy-3-methylpentanoate (2,3-dihydroxy-3-methylvalerate) into 2-oxo-3-methylpentanoate (2-oxo-3-methylvalerate) and of (2R)-2,3-dihydroxy-3-methylbutanoate (2,3-dihydroxyisovalerate) into 2-oxo-3-methylbutanoate (2-oxoisovalerate), the penultimate precursor to L-isoleucine and L-valine, respectively. This chain is Dihydroxy-acid dehydratase, found in Corynebacterium aurimucosum (strain ATCC 700975 / DSM 44827 / CIP 107346 / CN-1) (Corynebacterium nigricans).